A 37-amino-acid polypeptide reads, in one-letter code: Large ribosomal subunit protein bL36 (37 aa).

It belongs to the bacterial ribosomal protein bL36 family.

The protein is Large ribosomal subunit protein bL36 of Laribacter hongkongensis (strain HLHK9).